A 230-amino-acid chain; its full sequence is Ubiquitin carboxyl-terminal hydrolase isozyme L3 (230 aa).

The 225-residue stretch at 5–229 folds into the UCH catalytic domain; it reads RWLPLEANPE…LRFNAIALSA (225 aa). The segment at 8 to 13 is interaction with ubiquitin; the sequence is PLEANP. Residue cysteine 95 is the Nucleophile of the active site. Serine 130 is modified (phosphoserine). The interaction with ubiquitin. Crossover loop which restricts access of large ubiquitin adducts to the active site stretch occupies residues 152-159; that stretch reads AHEGQTEA. The active-site Proton donor is histidine 169. An interaction with ubiquitin region spans residues 219–224; it reads ELRFNA.

It belongs to the peptidase C12 family. As to quaternary structure, preferentially binds diubiquitin; the interaction does not hydrolyze diubiquitin but, in vitro, inhibits the hydrolyzing activity on other substrates. In terms of tissue distribution, ubiquitously expressed, with highest levels in brain, liver, heart, thymus, kidney and testis. Highly expressed in the cauda epididymidis, in meiotic pachytene spermatocytes and post-meiotic spematids. In the retina, enriched in the photoreceptor inner segment.

The protein localises to the cytoplasm. The enzyme catalyses Thiol-dependent hydrolysis of ester, thioester, amide, peptide and isopeptide bonds formed by the C-terminal Gly of ubiquitin (a 76-residue protein attached to proteins as an intracellular targeting signal).. Its activity is regulated as follows. Inhibited by monoubiquitin and diubiquitin. Deubiquitinating enzyme (DUB) that controls levels of cellular ubiquitin through processing of ubiquitin precursors and ubiquitinated proteins. Thiol protease that recognizes and hydrolyzes a peptide bond at the C-terminal glycine of either ubiquitin or NEDD8. Has a 10-fold preference for Arg and Lys at position P3'', and exhibits a preference towards 'Lys-48'-linked ubiquitin chains. Deubiquitinates ENAC in apical compartments, thereby regulating apical membrane recycling. Indirectly increases the phosphorylation of IGFIR, AKT and FOXO1 and promotes insulin-signaling and insulin-induced adipogenesis. Required for stress-response retinal, skeletal muscle and germ cell maintenance. May be involved in working memory. Can hydrolyze UBB(+1), a mutated form of ubiquitin which is not effectively degraded by the proteasome. This is Ubiquitin carboxyl-terminal hydrolase isozyme L3 (Uchl3) from Mus musculus (Mouse).